The following is a 281-amino-acid chain: Ribosomal RNA small subunit methyltransferase A (281 aa).

The S-adenosyl-L-methionine site is built by Asn-35, Leu-37, Gly-62, Glu-83, Asp-107, and Asn-125.

It belongs to the class I-like SAM-binding methyltransferase superfamily. rRNA adenine N(6)-methyltransferase family. RsmA subfamily.

The protein localises to the cytoplasm. It carries out the reaction adenosine(1518)/adenosine(1519) in 16S rRNA + 4 S-adenosyl-L-methionine = N(6)-dimethyladenosine(1518)/N(6)-dimethyladenosine(1519) in 16S rRNA + 4 S-adenosyl-L-homocysteine + 4 H(+). Specifically dimethylates two adjacent adenosines (A1518 and A1519) in the loop of a conserved hairpin near the 3'-end of 16S rRNA in the 30S particle. May play a critical role in biogenesis of 30S subunits. The chain is Ribosomal RNA small subunit methyltransferase A from Deinococcus geothermalis (strain DSM 11300 / CIP 105573 / AG-3a).